The primary structure comprises 547 residues: Undecaprenyl phosphate-alpha-4-amino-4-deoxy-L-arabinose arabinosyl transferase (547 aa).

The next 10 helical transmembrane spans lie at 83 to 103 (FASAAATGLSALLIFWFALQL), 111 to 131 (FLASLIYLSLLIVYGIGTYSV), 174 to 194 (FLTKGFIALAVPVVVIVPYVI), 205 to 225 (FGPLAILSAVLLAAPWAIAVH), 253 to 273 (APFWYYLPMGLLGTLPWLGLL), 286 to 306 (ISPETLYLLAWVILPLLFFSI), 311 to 331 (LLTYILPCFAPLAMLMAANAV), 346 to 366 (AWLNGLFGLICLVVLAVLAFS), 378 to 398 (GALAVAMVIFAGWSLLGFIQL), and 408 to 428 (SALCPMVLAIGLPWALPQSLI).

Belongs to the glycosyltransferase 83 family.

It is found in the cell inner membrane. It carries out the reaction 4-amino-4-deoxy-alpha-L-arabinopyranosyl di-trans,octa-cis-undecaprenyl phosphate + lipid IVA = lipid IIA + di-trans,octa-cis-undecaprenyl phosphate.. It participates in lipopolysaccharide metabolism; 4-amino-4-deoxy-beta-L-arabinose-lipid A biosynthesis. Its function is as follows. Catalyzes the transfer of the L-Ara4N moiety of the glycolipid undecaprenyl phosphate-alpha-L-Ara4N to lipid A. The modified arabinose is attached to lipid A and is required for resistance to polymyxin and cationic antimicrobial peptides. The sequence is that of Undecaprenyl phosphate-alpha-4-amino-4-deoxy-L-arabinose arabinosyl transferase from Aeromonas hydrophila subsp. hydrophila (strain ATCC 7966 / DSM 30187 / BCRC 13018 / CCUG 14551 / JCM 1027 / KCTC 2358 / NCIMB 9240 / NCTC 8049).